Here is a 447-residue protein sequence, read N- to C-terminus: Tubulin beta chain (447 aa).

Residues Q11, E69, S138, G142, T143, G144, N204, and N226 each coordinate GTP. E69 lines the Mg(2+) pocket. Residues 424-447 are disordered; sequence QYQEARSTDSDEYDNEEYYNQQEE. Acidic residues predominate over residues 433 to 447; the sequence is SDEYDNEEYYNQQEE.

This sequence belongs to the tubulin family. As to quaternary structure, dimer of alpha and beta chains. A typical microtubule is a hollow water-filled tube with an outer diameter of 25 nm and an inner diameter of 15 nM. Alpha-beta heterodimers associate head-to-tail to form protofilaments running lengthwise along the microtubule wall with the beta-tubulin subunit facing the microtubule plus end conferring a structural polarity. Microtubules usually have 13 protofilaments but different protofilament numbers can be found in some organisms and specialized cells. Requires Mg(2+) as cofactor. In terms of tissue distribution, lens specific.

The protein localises to the cytoplasm. The protein resides in the cytoskeleton. In terms of biological role, tubulin is the major constituent of microtubules, a cylinder consisting of laterally associated linear protofilaments composed of alpha- and beta-tubulin heterodimers. Microtubules grow by the addition of GTP-tubulin dimers to the microtubule end, where a stabilizing cap forms. Below the cap, tubulin dimers are in GDP-bound state, owing to GTPase activity of alpha-tubulin. This is Tubulin beta chain from Enteroctopus dofleini (North Pacific giant octopus).